The primary structure comprises 63 residues: Progonadoliberin-1 (63 aa).

The residue at position 1 (Q1) is a Pyrrolidone carboxylic acid. At G10 the chain carries Glycine amide.

Belongs to the GnRH family. Post-translationally, the precursor is cleaved by ACE, which removes the Gly-Lys-Arg peptide at the C-terminus, leading to mature hormone. The mature form of Gonadoliberin-1 is also cleaved and degraded by ACE.

Its subcellular location is the secreted. Functionally, stimulates the secretion of gonadotropins; it stimulates the secretion of both luteinizing and follicle-stimulating hormones. The sequence is that of Progonadoliberin-1 (GNRH1) from Mesocricetus auratus (Golden hamster).